The sequence spans 449 residues: Phosphoglucosamine mutase (449 aa).

Serine 101 acts as the Phosphoserine intermediate in catalysis. The Mg(2+) site is built by serine 101, aspartate 241, aspartate 243, and aspartate 245. Serine 101 bears the Phosphoserine mark.

The protein belongs to the phosphohexose mutase family. Mg(2+) is required as a cofactor. Post-translationally, activated by phosphorylation.

The catalysed reaction is alpha-D-glucosamine 1-phosphate = D-glucosamine 6-phosphate. Its function is as follows. Catalyzes the conversion of glucosamine-6-phosphate to glucosamine-1-phosphate. The protein is Phosphoglucosamine mutase of Ruminiclostridium cellulolyticum (strain ATCC 35319 / DSM 5812 / JCM 6584 / H10) (Clostridium cellulolyticum).